The chain runs to 1072 residues: DNA-directed RNA polymerase subunit beta (1072 aa).

Belongs to the RNA polymerase beta chain family. As to quaternary structure, in plastids the minimal PEP RNA polymerase catalytic core is composed of four subunits: alpha, beta, beta', and beta''. When a (nuclear-encoded) sigma factor is associated with the core the holoenzyme is formed, which can initiate transcription.

The protein localises to the plastid. The protein resides in the chloroplast. It catalyses the reaction RNA(n) + a ribonucleoside 5'-triphosphate = RNA(n+1) + diphosphate. In terms of biological role, DNA-dependent RNA polymerase catalyzes the transcription of DNA into RNA using the four ribonucleoside triphosphates as substrates. The polypeptide is DNA-directed RNA polymerase subunit beta (Lepidium virginicum (Virginia pepperweed)).